The following is a 617-amino-acid chain: Na(+)/H(+) antiporter NhaA 1 (617 aa).

The tract at residues 1 to 433 is na(+)/H(+) antiporter NhaA; that stretch reads MTVTEQTTAR…GWAIFRITDW (433 aa). 11 consecutive transmembrane segments (helical) span residues 33-53, 75-95, 113-133, 141-161, 171-191, 194-214, 234-254, 304-324, 340-360, 378-398, and 411-431; these read AAALLLTFTVIAILWANSPWA, MTVKHLVNDALMTFFFFIVGL, AVPVVAAAAGLIVPAIVFLAF, HAWGVVISTDTAFLVGALAII, LFLLTLAVVDDVGALVAIAVF, DAIQVGPLVVAVAVLVALALV, VALYLAGIHPTLAGVAVALLI, VGPAVSFVILPLFALVNAGVL, WGVVAGLVIGKFVGITGATWL, IAGGAALSGIGFTISLFIVDI, and IGVLAASVLAFVFGWAIFRIT. Positions 434–617 constitute a Thioredoxin domain; sequence LSPPEPVGLK…LIRALEAGRR (184 aa).

In the N-terminal section; belongs to the NhaA Na(+)/H(+) (TC 2.A.33) antiporter family.

Its subcellular location is the cell membrane. It catalyses the reaction Na(+)(in) + 2 H(+)(out) = Na(+)(out) + 2 H(+)(in). Functionally, na(+)/H(+) antiporter that extrudes sodium in exchange for external protons. This Mycolicibacterium vanbaalenii (strain DSM 7251 / JCM 13017 / BCRC 16820 / KCTC 9966 / NRRL B-24157 / PYR-1) (Mycobacterium vanbaalenii) protein is Na(+)/H(+) antiporter NhaA 1.